We begin with the raw amino-acid sequence, 163 residues long: Nucleotide-binding protein Asuc_2113 (163 aa).

The protein belongs to the YajQ family.

In terms of biological role, nucleotide-binding protein. The polypeptide is Nucleotide-binding protein Asuc_2113 (Actinobacillus succinogenes (strain ATCC 55618 / DSM 22257 / CCUG 43843 / 130Z)).